We begin with the raw amino-acid sequence, 297 residues long: MATH domain and coiled-coil domain-containing protein At2g05420 (297 aa).

The region spanning 7-139 is the MATH domain; the sequence is SKTITWVIEN…NGELTLVAKV (133 aa). Residues 239–281 adopt a coiled-coil conformation; that stretch reads KLDWLEKKHGEIKEKKKKEEASLKRLQEMEKQIFNEAQIYKEK.

The sequence is that of MATH domain and coiled-coil domain-containing protein At2g05420 from Arabidopsis thaliana (Mouse-ear cress).